Here is a 469-residue protein sequence, read N- to C-terminus: Probable Xaa-Pro aminopeptidase PEPP (469 aa).

Mn(2+) is bound by residues aspartate 264, aspartate 275, glutamate 398, and glutamate 438.

Belongs to the peptidase M24B family. Requires Mn(2+) as cofactor.

It catalyses the reaction Release of any N-terminal amino acid, including proline, that is linked to proline, even from a dipeptide or tripeptide.. Its function is as follows. Catalyzes the removal of a penultimate prolyl residue from the N-termini of peptides. The protein is Probable Xaa-Pro aminopeptidase PEPP (PEPP) of Ajellomyces capsulatus (strain H143) (Darling's disease fungus).